Reading from the N-terminus, the 378-residue chain is Succinyl-diaminopimelate desuccinylase (378 aa).

Zn(2+) is bound at residue histidine 67. Residue aspartate 69 is part of the active site. Residue aspartate 100 participates in Zn(2+) binding. The active-site Proton acceptor is glutamate 134. The Zn(2+) site is built by glutamate 135, glutamate 163, and histidine 349.

Belongs to the peptidase M20A family. DapE subfamily. In terms of assembly, homodimer. Zn(2+) is required as a cofactor. Requires Co(2+) as cofactor.

It catalyses the reaction N-succinyl-(2S,6S)-2,6-diaminopimelate + H2O = (2S,6S)-2,6-diaminopimelate + succinate. Its pathway is amino-acid biosynthesis; L-lysine biosynthesis via DAP pathway; LL-2,6-diaminopimelate from (S)-tetrahydrodipicolinate (succinylase route): step 3/3. Catalyzes the hydrolysis of N-succinyl-L,L-diaminopimelic acid (SDAP), forming succinate and LL-2,6-diaminopimelate (DAP), an intermediate involved in the bacterial biosynthesis of lysine and meso-diaminopimelic acid, an essential component of bacterial cell walls. This chain is Succinyl-diaminopimelate desuccinylase, found in Nitrosomonas eutropha (strain DSM 101675 / C91 / Nm57).